The primary structure comprises 111 residues: Probable 4-amino-4-deoxy-L-arabinose-phosphoundecaprenol flippase subunit ArnE (111 aa).

3 helical membrane-spanning segments follow: residues 39 to 59 (WLAI…WVLQ), 61 to 81 (VPVG…TLAA), and 89 to 109 (VSLR…CMGV). The EamA domain maps to 40 to 109 (LAISLLLLGG…IVAGVMCMGV (70 aa)).

Belongs to the ArnE family. In terms of assembly, heterodimer of ArnE and ArnF.

The protein resides in the cell inner membrane. The protein operates within bacterial outer membrane biogenesis; lipopolysaccharide biosynthesis. Its function is as follows. Translocates 4-amino-4-deoxy-L-arabinose-phosphoundecaprenol (alpha-L-Ara4N-phosphoundecaprenol) from the cytoplasmic to the periplasmic side of the inner membrane. The polypeptide is Probable 4-amino-4-deoxy-L-arabinose-phosphoundecaprenol flippase subunit ArnE (Sodalis glossinidius (strain morsitans)).